The chain runs to 396 residues: Dihydrolipoyllysine-residue acetyltransferase component of pyruvate dehydrogenase complex (396 aa).

A Lipoyl-binding domain is found at 1 to 69 (MPDIGLEEVE…KTDALIMRCE (69 aa)). Lys35 carries the post-translational modification N6-lipoyllysine. One can recognise a Peripheral subunit-binding (PSBD) domain in the interval 104–141 (HATPLIRRLARNLNINLYDVVGTGPKNRILKEDLDLYQ). The active site involves His369.

Belongs to the 2-oxoacid dehydrogenase family. Forms a 24-polypeptide structural core with octahedral symmetry. It depends on (R)-lipoate as a cofactor.

It catalyses the reaction N(6)-[(R)-dihydrolipoyl]-L-lysyl-[protein] + acetyl-CoA = N(6)-[(R)-S(8)-acetyldihydrolipoyl]-L-lysyl-[protein] + CoA. Functionally, the pyruvate dehydrogenase complex catalyzes the overall conversion of pyruvate to acetyl-CoA and CO(2). It contains multiple copies of three enzymatic components: pyruvate dehydrogenase (E1), dihydrolipoamide acetyltransferase (E2) and lipoamide dehydrogenase (E3). In Buchnera aphidicola subsp. Acyrthosiphon pisum (strain APS) (Acyrthosiphon pisum symbiotic bacterium), this protein is Dihydrolipoyllysine-residue acetyltransferase component of pyruvate dehydrogenase complex (aceF).